The sequence spans 284 residues: Bifunctional protein FolD (284 aa).

Residues glycine 163 to serine 165, serine 188, and isoleucine 229 each bind NADP(+).

Belongs to the tetrahydrofolate dehydrogenase/cyclohydrolase family. In terms of assembly, homodimer.

The enzyme catalyses (6R)-5,10-methylene-5,6,7,8-tetrahydrofolate + NADP(+) = (6R)-5,10-methenyltetrahydrofolate + NADPH. It catalyses the reaction (6R)-5,10-methenyltetrahydrofolate + H2O = (6R)-10-formyltetrahydrofolate + H(+). The protein operates within one-carbon metabolism; tetrahydrofolate interconversion. In terms of biological role, catalyzes the oxidation of 5,10-methylenetetrahydrofolate to 5,10-methenyltetrahydrofolate and then the hydrolysis of 5,10-methenyltetrahydrofolate to 10-formyltetrahydrofolate. This chain is Bifunctional protein FolD, found in Campylobacter hominis (strain ATCC BAA-381 / DSM 21671 / CCUG 45161 / LMG 19568 / NCTC 13146 / CH001A).